The chain runs to 173 residues: Transcription factor E (173 aa).

The HTH TFE/IIEalpha-type domain maps to 6–89; that stretch reads PLEELLEFVR…YWYVDRETLN (84 aa).

Belongs to the TFE family. As to quaternary structure, monomer. Interaction with RNA polymerase subunits RpoF and RpoE is necessary for Tfe stimulatory transcription activity. Able to interact with Tbp and RNA polymerase in the absence of DNA promoter. Interacts both with the preinitiation and elongation complexes.

Functionally, transcription factor that plays a role in the activation of archaeal genes transcribed by RNA polymerase. Facilitates transcription initiation by enhancing TATA-box recognition by TATA-box-binding protein (Tbp), and transcription factor B (Tfb) and RNA polymerase recruitment. Not absolutely required for transcription in vitro, but particularly important in cases where Tbp or Tfb function is not optimal. It dynamically alters the nucleic acid-binding properties of RNA polymerases by stabilizing the initiation complex and destabilizing elongation complexes. Seems to translocate with the RNA polymerase following initiation and acts by binding to the non template strand of the transcription bubble in elongation complexes. The chain is Transcription factor E from Ignicoccus hospitalis (strain KIN4/I / DSM 18386 / JCM 14125).